The chain runs to 134 residues: Protein Turandot E (134 aa).

A signal peptide spans 1–38; the sequence is MSNTRTVHSSTSISKMNSALQISCLLVVLGCLLGSGHC.

The protein belongs to the Turandot family.

It localises to the secreted. In terms of biological role, a humoral factor that may play a role in stress tolerance. The protein is Protein Turandot E of Drosophila melanogaster (Fruit fly).